The chain runs to 222 residues: Eukaryotic translation initiation factor 3 subunit K (222 aa).

The PCI domain maps to Tyr46–Lys208.

This sequence belongs to the eIF-3 subunit K family. As to quaternary structure, component of the eukaryotic translation initiation factor 3 (eIF-3) complex. The eIF-3 complex interacts with pix.

The protein resides in the cytoplasm. Its function is as follows. Component of the eukaryotic translation initiation factor 3 (eIF-3) complex, which is involved in protein synthesis of a specialized repertoire of mRNAs and, together with other initiation factors, stimulates binding of mRNA and methionyl-tRNAi to the 40S ribosome. The eIF-3 complex specifically targets and initiates translation of a subset of mRNAs involved in cell proliferation. The chain is Eukaryotic translation initiation factor 3 subunit K from Drosophila ananassae (Fruit fly).